We begin with the raw amino-acid sequence, 600 residues long: DNA mismatch repair protein MutL (600 aa).

The tract at residues 327–405 is disordered; sequence DGSRAATTGA…FSPQPAAAEP (79 aa). The span at 349-367 shows a compositional bias: polar residues; the sequence is PNSQRPQTAWSAETSSSRP.

Belongs to the DNA mismatch repair MutL/HexB family.

Functionally, this protein is involved in the repair of mismatches in DNA. It is required for dam-dependent methyl-directed DNA mismatch repair. May act as a 'molecular matchmaker', a protein that promotes the formation of a stable complex between two or more DNA-binding proteins in an ATP-dependent manner without itself being part of a final effector complex. The protein is DNA mismatch repair protein MutL of Rhizobium johnstonii (strain DSM 114642 / LMG 32736 / 3841) (Rhizobium leguminosarum bv. viciae).